A 251-amino-acid polypeptide reads, in one-letter code: CDP-diacylglycerol pyrophosphatase (251 aa).

A helical membrane pass occupies residues 5 to 25 (GYFLLAVIVIVAAAGVGYWKF).

It belongs to the Cdh family.

It localises to the cell inner membrane. The catalysed reaction is a CDP-1,2-diacyl-sn-glycerol + H2O = a 1,2-diacyl-sn-glycero-3-phosphate + CMP + 2 H(+). The protein operates within phospholipid metabolism; CDP-diacylglycerol degradation; phosphatidate from CDP-diacylglycerol: step 1/1. The protein is CDP-diacylglycerol pyrophosphatase of Salmonella paratyphi A (strain ATCC 9150 / SARB42).